Reading from the N-terminus, the 144-residue chain is Large ribosomal subunit protein uL11 (144 aa).

This sequence belongs to the universal ribosomal protein uL11 family. In terms of assembly, part of the ribosomal stalk of the 50S ribosomal subunit. Interacts with L10 and the large rRNA to form the base of the stalk. L10 forms an elongated spine to which L12 dimers bind in a sequential fashion forming a multimeric L10(L12)X complex. One or more lysine residues are methylated.

In terms of biological role, forms part of the ribosomal stalk which helps the ribosome interact with GTP-bound translation factors. The chain is Large ribosomal subunit protein uL11 from Acidiphilium cryptum (strain JF-5).